Consider the following 482-residue polypeptide: Peptide chain release factor PrfB2, chloroplastic (482 aa).

The N-terminal 21 residues, 1–21, are a transit peptide targeting the chloroplast; the sequence is MLSLIIRRSRSRFIIHGIKIS.

It belongs to the prokaryotic/mitochondrial release factor family.

The protein resides in the plastid. Its subcellular location is the chloroplast stroma. Directs the termination of translation in response to the peptide chain termination codon UGA. Required for the proper translation, stability and normal processing of UGA-containing polycistronic transcripts in chloroplasts. This Arabidopsis thaliana (Mouse-ear cress) protein is Peptide chain release factor PrfB2, chloroplastic.